Reading from the N-terminus, the 157-residue chain is Crossover junction endodeoxyribonuclease RuvC (157 aa).

Catalysis depends on residues aspartate 7, glutamate 66, and aspartate 139. 3 residues coordinate Mg(2+): aspartate 7, glutamate 66, and aspartate 139.

This sequence belongs to the RuvC family. In terms of assembly, homodimer which binds Holliday junction (HJ) DNA. The HJ becomes 2-fold symmetrical on binding to RuvC with unstacked arms; it has a different conformation from HJ DNA in complex with RuvA. In the full resolvosome a probable DNA-RuvA(4)-RuvB(12)-RuvC(2) complex forms which resolves the HJ. It depends on Mg(2+) as a cofactor.

It localises to the cytoplasm. The enzyme catalyses Endonucleolytic cleavage at a junction such as a reciprocal single-stranded crossover between two homologous DNA duplexes (Holliday junction).. The RuvA-RuvB-RuvC complex processes Holliday junction (HJ) DNA during genetic recombination and DNA repair. Endonuclease that resolves HJ intermediates. Cleaves cruciform DNA by making single-stranded nicks across the HJ at symmetrical positions within the homologous arms, yielding a 5'-phosphate and a 3'-hydroxyl group; requires a central core of homology in the junction. The consensus cleavage sequence is 5'-(A/T)TT(C/G)-3'. Cleavage occurs on the 3'-side of the TT dinucleotide at the point of strand exchange. HJ branch migration catalyzed by RuvA-RuvB allows RuvC to scan DNA until it finds its consensus sequence, where it cleaves and resolves the cruciform DNA. The protein is Crossover junction endodeoxyribonuclease RuvC of Helicobacter pylori (strain P12).